A 286-amino-acid chain; its full sequence is Translocon-associated protein subunit alpha (286 aa).

Positions 1 to 23 (MRVLPRLLLLLLLAFPAAVLLRG) are cleaved as a signal peptide. Residues 24–207 (GPGGSLVAAQ…EREDGLDGET (184 aa)) are Lumenal-facing. Over residues 37-75 (EDEETVEDSIIEDEDDEAEVEEDEPTDLAEDKEEEDVSG) the composition is skewed to acidic residues. Positions 37–83 (EDEETVEDSIIEDEDDEAEVEEDEPTDLAEDKEEEDVSGEPEASPSA) are disordered. Asparagine 136 and asparagine 191 each carry an N-linked (GlcNAc...) asparagine glycan. The helical transmembrane segment at 208-228 (IFMYMFLAGLGLLVVVGLHQL) threads the bilayer. Topologically, residues 229-286 (LESRKRKRPIQKVEMGTSSQNDVDMSWIPQETLNQINKASPRRLPRKRAQKRSVGSDE) are cytoplasmic. Serine 247 bears the Phosphoserine mark. Threonine 260 is modified (phosphothreonine). Residues 261–286 (LNQINKASPRRLPRKRAQKRSVGSDE) form a disordered region. Phosphoserine is present on serine 268. A compositionally biased stretch (basic residues) spans 268-279 (SPRRLPRKRAQK).

Belongs to the TRAP-alpha family. As to quaternary structure, heterotetramer of TRAP-alpha, TRAP-beta, TRAP-delta and TRAP-gamma. Interacts with palmitoylated calnexin (CALX), the interaction is required for efficient folding of glycosylated proteins. In terms of processing, phosphorylated in its cytoplasmic tail.

It localises to the endoplasmic reticulum membrane. Its function is as follows. TRAP proteins are part of a complex whose function is to bind calcium to the ER membrane and thereby regulate the retention of ER resident proteins. May be involved in the recycling of the translocation apparatus after completion of the translocation process or may function as a membrane-bound chaperone facilitating folding of translocated proteins. In Canis lupus familiaris (Dog), this protein is Translocon-associated protein subunit alpha (SSR1).